The chain runs to 496 residues: Maturase K (496 aa).

This sequence belongs to the intron maturase 2 family. MatK subfamily.

The protein localises to the plastid. It localises to the chloroplast. Functionally, usually encoded in the trnK tRNA gene intron. Probably assists in splicing its own and other chloroplast group II introns. The chain is Maturase K from Paeonia lactiflora (Chinese peony).